We begin with the raw amino-acid sequence, 34 residues long: Photosystem II reaction center protein M (34 aa).

The helical transmembrane segment at 5–25 (ILGLTATALFIIIPTSFLLIL) threads the bilayer.

It belongs to the PsbM family. As to quaternary structure, PSII is composed of 1 copy each of membrane proteins PsbA, PsbB, PsbC, PsbD, PsbE, PsbF, PsbH, PsbI, PsbJ, PsbK, PsbL, PsbM, PsbT, PsbX, PsbY, PsbZ, Psb30/Ycf12, at least 3 peripheral proteins of the oxygen-evolving complex and a large number of cofactors. It forms dimeric complexes.

It localises to the plastid. The protein resides in the chloroplast thylakoid membrane. Functionally, one of the components of the core complex of photosystem II (PSII). PSII is a light-driven water:plastoquinone oxidoreductase that uses light energy to abstract electrons from H(2)O, generating O(2) and a proton gradient subsequently used for ATP formation. It consists of a core antenna complex that captures photons, and an electron transfer chain that converts photonic excitation into a charge separation. This subunit is found at the monomer-monomer interface. This chain is Photosystem II reaction center protein M, found in Stigeoclonium helveticum (Green alga).